Here is a 338-residue protein sequence, read N- to C-terminus: TPR repeat-containing protein MJ0941 (338 aa).

TPR repeat units follow at residues 27–62 (LEAVANVLRAYRELFEGNLIKALYYVDKALELEPDF), 63–96 (YLALFLKGLALSAKGEIKEAITTFEELLSYESKN), 97–130 (PITWVFVGQLYGMSGNCDEALKCYNKALGIENRF), 131–164 (LSAFLLKTICLEFLGEYDELLKCYNEVLTYTPNF), 165–198 (VPMWVKKAEILRKLGRYEDALLCLNRALELKPHD), 199–232 (KNALYLKGVLLKRMGKFREALECFKKLIDELNVK), 268–301 (VALWYFKGELYERLGKLDEALKCYEKVIELQPHY), and 302–335 (IKALLSKARIYERQGNIEAAIEYYNKAVENIHKD).

In Methanocaldococcus jannaschii (strain ATCC 43067 / DSM 2661 / JAL-1 / JCM 10045 / NBRC 100440) (Methanococcus jannaschii), this protein is TPR repeat-containing protein MJ0941.